A 137-amino-acid chain; its full sequence is Large-conductance mechanosensitive channel (137 aa).

3 helical membrane passes run 15–35 (VDLA…NSIV), 38–58 (IIMP…MFIQ), and 80–100 (GNFV…FLVV).

Belongs to the MscL family. Homopentamer.

The protein resides in the cell inner membrane. Functionally, channel that opens in response to stretch forces in the membrane lipid bilayer. May participate in the regulation of osmotic pressure changes within the cell. This is Large-conductance mechanosensitive channel from Brucella anthropi (strain ATCC 49188 / DSM 6882 / CCUG 24695 / JCM 21032 / LMG 3331 / NBRC 15819 / NCTC 12168 / Alc 37) (Ochrobactrum anthropi).